The following is a 383-amino-acid chain: S-adenosylmethionine synthase (383 aa).

Histidine 15 provides a ligand contact to ATP. Aspartate 17 contacts Mg(2+). Glutamate 43 contacts K(+). L-methionine-binding residues include glutamate 56 and glutamine 99. Residues 99–109 (QSPDINQGVDR) are flexible loop. Residues 164 to 166 (DAK), 230 to 231 (RF), aspartate 239, 245 to 246 (RK), alanine 262, and lysine 266 each bind ATP. Position 239 (aspartate 239) interacts with L-methionine. An L-methionine-binding site is contributed by lysine 270.

It belongs to the AdoMet synthase family. In terms of assembly, homotetramer; dimer of dimers. Mg(2+) is required as a cofactor. It depends on K(+) as a cofactor.

It is found in the cytoplasm. The enzyme catalyses L-methionine + ATP + H2O = S-adenosyl-L-methionine + phosphate + diphosphate. It functions in the pathway amino-acid biosynthesis; S-adenosyl-L-methionine biosynthesis; S-adenosyl-L-methionine from L-methionine: step 1/1. Catalyzes the formation of S-adenosylmethionine (AdoMet) from methionine and ATP. The overall synthetic reaction is composed of two sequential steps, AdoMet formation and the subsequent tripolyphosphate hydrolysis which occurs prior to release of AdoMet from the enzyme. The chain is S-adenosylmethionine synthase from Shewanella putrefaciens (strain CN-32 / ATCC BAA-453).